The sequence spans 296 residues: Acetylglutamate kinase (296 aa).

Residues 65–66 (GG), Arg-87, and Asn-190 contribute to the substrate site.

Belongs to the acetylglutamate kinase family. ArgB subfamily.

The protein resides in the cytoplasm. It catalyses the reaction N-acetyl-L-glutamate + ATP = N-acetyl-L-glutamyl 5-phosphate + ADP. It participates in amino-acid biosynthesis; L-arginine biosynthesis; N(2)-acetyl-L-ornithine from L-glutamate: step 2/4. Its function is as follows. Catalyzes the ATP-dependent phosphorylation of N-acetyl-L-glutamate. The chain is Acetylglutamate kinase from Moorella thermoacetica (strain ATCC 39073 / JCM 9320).